The sequence spans 57 residues: Potassium channel toxin alpha-KTx 23.3 (57 aa).

Positions 1–23 (MKMSIVIILLLFTCLIATNGASG) are cleaved as a signal peptide. 4 disulfide bridges follow: cysteine 26–cysteine 46, cysteine 32–cysteine 51, cysteine 36–cysteine 53, and cysteine 41–cysteine 56.

The protein belongs to the short scorpion toxin superfamily. Potassium channel inhibitor family. Alpha-KTx 23 subfamily. Expressed by the venom gland.

Its subcellular location is the secreted. Its function is as follows. This toxin shows both immunosuppressive and anti-inflammatory activities. It has the potential to inhibit human T cell activation, since it reduces IL-2 secretion and the expression of T cell activation marker CD69 and acts as an anti-inflammatory agent, since it provokes the reduction of secretion of both IFN-gamma and TNF-alpha. In vivo, the delayed-type hypersensitivity response in rat autoimmune disease model is ameliorated in the presence of this toxin. Acts by blocking Kv1.3/KCNA3 potassium channels of T-lymphocytes. The sequence is that of Potassium channel toxin alpha-KTx 23.3 from Scorpiops tibetanus (Scorpion).